The sequence spans 404 residues: Cysteine desulfurase IscS (404 aa).

Residues Ala75 to Thr76, Asn155, Gln183, and Ser203 to His205 contribute to the pyridoxal 5'-phosphate site. An N6-(pyridoxal phosphate)lysine modification is found at Lys206. A pyridoxal 5'-phosphate-binding site is contributed by Thr243. The active-site Cysteine persulfide intermediate is Cys328. Position 328 (Cys328) interacts with [2Fe-2S] cluster.

The protein belongs to the class-V pyridoxal-phosphate-dependent aminotransferase family. NifS/IscS subfamily. Homodimer. Forms a heterotetramer with IscU, interacts with other sulfur acceptors. Requires pyridoxal 5'-phosphate as cofactor.

It localises to the cytoplasm. It carries out the reaction (sulfur carrier)-H + L-cysteine = (sulfur carrier)-SH + L-alanine. It participates in cofactor biosynthesis; iron-sulfur cluster biosynthesis. In terms of biological role, master enzyme that delivers sulfur to a number of partners involved in Fe-S cluster assembly, tRNA modification or cofactor biosynthesis. Catalyzes the removal of elemental sulfur atoms from cysteine to produce alanine. Functions as a sulfur delivery protein for Fe-S cluster synthesis onto IscU, an Fe-S scaffold assembly protein, as well as other S acceptor proteins. This chain is Cysteine desulfurase IscS, found in Vesicomyosocius okutanii subsp. Calyptogena okutanii (strain HA).